A 291-amino-acid chain; its full sequence is F-box/kelch-repeat protein At5g38670 (291 aa).

The F-box domain occupies 5–51; it reads TNPNPSLPDDLILSCVARVSRLYYPALSLVSKSFRSLIASPELYKTR. Kelch repeat units lie at residues 46–91, 92–140, 142–187, and 189–232; these read ELYK…VLDE, KIYV…RFDG, LHLV…WYTI, and KGDI…YGGK.

This Arabidopsis thaliana (Mouse-ear cress) protein is F-box/kelch-repeat protein At5g38670.